Here is a 452-residue protein sequence, read N- to C-terminus: Protein CSN12 homolog (452 aa).

The 198-residue stretch at 249–446 (VTFKYYEGVL…GFVVLSKSGA (198 aa)) folds into the PCI domain.

This sequence belongs to the CSN12 family.

The chain is Protein CSN12 homolog (csn-8) from Neurospora crassa (strain ATCC 24698 / 74-OR23-1A / CBS 708.71 / DSM 1257 / FGSC 987).